An 830-amino-acid polypeptide reads, in one-letter code: Probable mixed-linked glucan synthase 7 (830 aa).

The next 2 membrane-spanning stretches (helical) occupy residues 61–81 (LTIFVRIAIFVLFFKWRITYA) and 98–118 (AATFWTASIAGELWFAFMWVL). Asp-186 is a catalytic residue. Positions 251-279 (ELVRDRRRVRREYEEMRLRIDALQAADAR) form a coiled coil. The substrate site is built by Asp-367 and Asp-369. Residue Asp-529 is part of the active site. The next 6 helical transmembrane spans lie at 613–633 (LFLMAYCLFPAIPLIAGGGGW), 638–658 (TPTYVAFLAALMVTLAAVAVL), 676–696 (FWMVSATSAYLAAVAQVALKV), 735–755 (ALMAPTAAALAVNVASMAAAG), 776–796 (LPVAFNVWVVVHLYPFALGLM), and 805–825 (PILFLFAVVAYLAVRFLCLLL).

It belongs to the glycosyltransferase 2 family. Plant cellulose synthase-like F subfamily. In terms of tissue distribution, expressed in mature pollen.

It localises to the golgi apparatus membrane. Its function is as follows. May catalyze both beta-1,3 and beta-1,4 glycosidic linkage on beta-D-glucan. Essential for (1,3;1,4)-beta-D-glucans synthesis in grasses and cereals (Poaceae). The mixed-linked glucans (which are not present in walls of dicotyledons or most other monocotyledonous plants) are particularly important constituents of the walls of the starchy endosperm and aleurone cells of cereal grains such as oats, wheat, rice and barley. They can account for up to 70% by weight of the wall. The chain is Probable mixed-linked glucan synthase 7 (CSLF7) from Oryza sativa subsp. japonica (Rice).